Here is a 312-residue protein sequence, read N- to C-terminus: Aspartoacylase (312 aa).

Zn(2+)-binding residues include histidine 20 and glutamate 23. N-acetyl-L-aspartate-binding residues include arginine 62, asparagine 69, and arginine 70. Position 115 (histidine 115) interacts with Zn(2+). The N-acetyl-L-aspartate site is built by tyrosine 163 and arginine 167. Glutamate 177 functions as the Proton donor/acceptor in the catalytic mechanism. Tyrosine 287 contributes to the N-acetyl-L-aspartate binding site.

Belongs to the AspA/AstE family. Aspartoacylase subfamily. In terms of assembly, homodimer. Zn(2+) is required as a cofactor. As to expression, detected in kidney proximal tubule cells (at protein level).

Its subcellular location is the cytoplasm. The protein resides in the nucleus. It carries out the reaction an N-acyl-L-aspartate + H2O = a carboxylate + L-aspartate. It catalyses the reaction N-acetyl-L-aspartate + H2O = L-aspartate + acetate. Catalyzes the deacetylation of N-acetylaspartic acid (NAA) to produce acetate and L-aspartate. NAA occurs in high concentration in brain and its hydrolysis NAA plays a significant part in the maintenance of intact white matter. In other tissues it acts as a scavenger of NAA from body fluids. This Rattus norvegicus (Rat) protein is Aspartoacylase.